Reading from the N-terminus, the 88-residue chain is Small ribosomal subunit protein bS20 (88 aa).

The segment at 1–20 (MANTAQARKRARQAVVQNAH) is disordered.

The protein belongs to the bacterial ribosomal protein bS20 family.

Its function is as follows. Binds directly to 16S ribosomal RNA. The sequence is that of Small ribosomal subunit protein bS20 from Ralstonia pickettii (strain 12J).